The following is a 188-amino-acid chain: Elongation factor P (188 aa).

The protein belongs to the elongation factor P family.

The protein resides in the cytoplasm. The protein operates within protein biosynthesis; polypeptide chain elongation. In terms of biological role, involved in peptide bond synthesis. Stimulates efficient translation and peptide-bond synthesis on native or reconstituted 70S ribosomes in vitro. Probably functions indirectly by altering the affinity of the ribosome for aminoacyl-tRNA, thus increasing their reactivity as acceptors for peptidyl transferase. In Rickettsia rickettsii (strain Iowa), this protein is Elongation factor P.